The chain runs to 377 residues: Succinyl-diaminopimelate desuccinylase (377 aa).

H68 is a Zn(2+) binding site. D70 is a catalytic residue. Residue D101 coordinates Zn(2+). E135 functions as the Proton acceptor in the catalytic mechanism. Zn(2+)-binding residues include E136, E164, and H350.

Belongs to the peptidase M20A family. DapE subfamily. In terms of assembly, homodimer. Requires Zn(2+) as cofactor. Co(2+) serves as cofactor.

The catalysed reaction is N-succinyl-(2S,6S)-2,6-diaminopimelate + H2O = (2S,6S)-2,6-diaminopimelate + succinate. It functions in the pathway amino-acid biosynthesis; L-lysine biosynthesis via DAP pathway; LL-2,6-diaminopimelate from (S)-tetrahydrodipicolinate (succinylase route): step 3/3. Functionally, catalyzes the hydrolysis of N-succinyl-L,L-diaminopimelic acid (SDAP), forming succinate and LL-2,6-diaminopimelate (DAP), an intermediate involved in the bacterial biosynthesis of lysine and meso-diaminopimelic acid, an essential component of bacterial cell walls. The polypeptide is Succinyl-diaminopimelate desuccinylase (Vibrio vulnificus (strain CMCP6)).